The following is a 151-amino-acid chain: 3-hydroxyacyl-thioester dehydratase Z (151 aa).

The MaoC-like domain occupies 11–131 (AAAAGEKVGQ…TVQATVSTTV (121 aa)). Substrate contacts are provided by residues 60-63 (IAHG), 86-89 (AINY), 97-99 (PAP), Gln124, and Arg148.

The protein belongs to the enoyl-CoA hydratase/isomerase family. Homodimer.

The enzyme catalyses a (3R)-3-hydroxyacyl-CoA = a (2E)-enoyl-CoA + H2O. Shows trans-enoyl-CoA hydratase/3-hydroxyacyl-CoA dehydratase activity. The chain is 3-hydroxyacyl-thioester dehydratase Z from Mycobacterium bovis (strain ATCC BAA-935 / AF2122/97).